Here is a 608-residue protein sequence, read N- to C-terminus: Granule-bound starch synthase 1, chloroplastic/amyloplastic (608 aa).

Residues 1–76 constitute a chloroplast transit peptide; the sequence is MATITASHFV…EGGMAAGTIV (76 aa). An ADP-alpha-D-glucose-binding site is contributed by lysine 96.

It belongs to the glycosyltransferase 1 family. Bacterial/plant glycogen synthase subfamily.

The protein localises to the plastid. It localises to the chloroplast. Its subcellular location is the amyloplast. The enzyme catalyses an NDP-alpha-D-glucose + [(1-&gt;4)-alpha-D-glucosyl](n) = [(1-&gt;4)-alpha-D-glucosyl](n+1) + a ribonucleoside 5'-diphosphate + H(+). The protein operates within glycan biosynthesis; starch biosynthesis. Required for the synthesis of amylose. This Ipomoea batatas (Sweet potato) protein is Granule-bound starch synthase 1, chloroplastic/amyloplastic (WAXY).